The primary structure comprises 165 residues: Nucleotide-binding protein PMT9312_0481 (165 aa).

It belongs to the YajQ family.

Its function is as follows. Nucleotide-binding protein. The chain is Nucleotide-binding protein PMT9312_0481 from Prochlorococcus marinus (strain MIT 9312).